The primary structure comprises 229 residues: 5'-methylthioadenosine/S-adenosylhomocysteine nucleosidase (229 aa).

The active-site Proton acceptor is glutamate 12. Residues glycine 78, isoleucine 152, and 173–174 (ME) each bind substrate. Aspartate 197 functions as the Proton donor in the catalytic mechanism.

The protein belongs to the PNP/UDP phosphorylase family. MtnN subfamily.

The catalysed reaction is S-adenosyl-L-homocysteine + H2O = S-(5-deoxy-D-ribos-5-yl)-L-homocysteine + adenine. The enzyme catalyses S-methyl-5'-thioadenosine + H2O = 5-(methylsulfanyl)-D-ribose + adenine. It catalyses the reaction 5'-deoxyadenosine + H2O = 5-deoxy-D-ribose + adenine. The protein operates within amino-acid biosynthesis; L-methionine biosynthesis via salvage pathway; S-methyl-5-thio-alpha-D-ribose 1-phosphate from S-methyl-5'-thioadenosine (hydrolase route): step 1/2. Functionally, catalyzes the irreversible cleavage of the glycosidic bond in both 5'-methylthioadenosine (MTA) and S-adenosylhomocysteine (SAH/AdoHcy) to adenine and the corresponding thioribose, 5'-methylthioribose and S-ribosylhomocysteine, respectively. Also cleaves 5'-deoxyadenosine, a toxic by-product of radical S-adenosylmethionine (SAM) enzymes, into 5-deoxyribose and adenine. In Pasteurella multocida (strain Pm70), this protein is 5'-methylthioadenosine/S-adenosylhomocysteine nucleosidase.